The primary structure comprises 66 residues: Stress-associated endoplasmic reticulum protein 1 (66 aa).

The segment at 1–31 (MVAKQRIRMANEKHSKNITQRGNVAKTSRNA) is disordered. Over residues 17-30 (NITQRGNVAKTSRN) the composition is skewed to polar residues. Residues 39–59 (GPWLLALFIFVVCGSAIFQII) traverse the membrane as a helical segment.

It belongs to the RAMP4 family. In terms of assembly, interacts with SEC61B, SEC61A1 and the SEC61 complex. Interacts with CANX.

The protein resides in the membrane. It is found in the endoplasmic reticulum membrane. Functionally, interacts with target proteins during their translocation into the lumen of the endoplasmic reticulum. Protects unfolded target proteins against degradation during ER stress. May facilitate glycosylation of target proteins after termination of ER stress. May modulate the use of N-glycosylation sites on target proteins. This Bos taurus (Bovine) protein is Stress-associated endoplasmic reticulum protein 1 (SERP1).